We begin with the raw amino-acid sequence, 376 residues long: Queuine tRNA-ribosyltransferase (376 aa).

Aspartate 89 serves as the catalytic Proton acceptor. Residues 89 to 93 (DSGGF), aspartate 143, glutamine 194, and glycine 221 contribute to the substrate site. Positions 252 to 258 (GVGIPSN) are RNA binding. The active-site Nucleophile is aspartate 271. An RNA binding; important for wobble base 34 recognition region spans residues 276 to 280 (ARNGR). 4 residues coordinate Zn(2+): cysteine 309, cysteine 311, cysteine 314, and histidine 340.

This sequence belongs to the queuine tRNA-ribosyltransferase family. In terms of assembly, homodimer. Within each dimer, one monomer is responsible for RNA recognition and catalysis, while the other monomer binds to the replacement base PreQ1. The cofactor is Zn(2+).

The enzyme catalyses 7-aminomethyl-7-carbaguanine + guanosine(34) in tRNA = 7-aminomethyl-7-carbaguanosine(34) in tRNA + guanine. It functions in the pathway tRNA modification; tRNA-queuosine biosynthesis. In terms of biological role, catalyzes the base-exchange of a guanine (G) residue with the queuine precursor 7-aminomethyl-7-deazaguanine (PreQ1) at position 34 (anticodon wobble position) in tRNAs with GU(N) anticodons (tRNA-Asp, -Asn, -His and -Tyr). Catalysis occurs through a double-displacement mechanism. The nucleophile active site attacks the C1' of nucleotide 34 to detach the guanine base from the RNA, forming a covalent enzyme-RNA intermediate. The proton acceptor active site deprotonates the incoming PreQ1, allowing a nucleophilic attack on the C1' of the ribose to form the product. After dissociation, two additional enzymatic reactions on the tRNA convert PreQ1 to queuine (Q), resulting in the hypermodified nucleoside queuosine (7-(((4,5-cis-dihydroxy-2-cyclopenten-1-yl)amino)methyl)-7-deazaguanosine). The protein is Queuine tRNA-ribosyltransferase of Clostridium botulinum (strain Kyoto / Type A2).